A 223-amino-acid chain; its full sequence is Large ribosomal subunit protein uL3 (223 aa).

This sequence belongs to the universal ribosomal protein uL3 family. As to quaternary structure, part of the 50S ribosomal subunit. Forms a cluster with proteins L14 and L19.

Its function is as follows. One of the primary rRNA binding proteins, it binds directly near the 3'-end of the 23S rRNA, where it nucleates assembly of the 50S subunit. The sequence is that of Large ribosomal subunit protein uL3 from Nocardioides sp. (strain ATCC BAA-499 / JS614).